Reading from the N-terminus, the 345-residue chain is Biotin synthase (345 aa).

In terms of domain architecture, Radical SAM core spans 38–256 (GEVQVSTLLS…IAVARIMMPR (219 aa)). [4Fe-4S] cluster is bound by residues C53, C57, and C60. [2Fe-2S] cluster contacts are provided by C97, C128, C188, and R260.

It belongs to the radical SAM superfamily. Biotin synthase family. In terms of assembly, homodimer. [4Fe-4S] cluster serves as cofactor. Requires [2Fe-2S] cluster as cofactor.

It catalyses the reaction (4R,5S)-dethiobiotin + (sulfur carrier)-SH + 2 reduced [2Fe-2S]-[ferredoxin] + 2 S-adenosyl-L-methionine = (sulfur carrier)-H + biotin + 2 5'-deoxyadenosine + 2 L-methionine + 2 oxidized [2Fe-2S]-[ferredoxin]. Its pathway is cofactor biosynthesis; biotin biosynthesis; biotin from 7,8-diaminononanoate: step 2/2. Catalyzes the conversion of dethiobiotin (DTB) to biotin by the insertion of a sulfur atom into dethiobiotin via a radical-based mechanism. The chain is Biotin synthase from Sodalis glossinidius (strain morsitans).